The chain runs to 142 residues: Hemoglobin subunit alpha (142 aa).

The region spanning 2–142 (VLSPADKSNV…VSTVLTSKYR (141 aa)) is the Globin domain. Ser-4 is modified (phosphoserine). Lys-8 and Lys-12 each carry N6-succinyllysine. Lys-17 carries the N6-acetyllysine; alternate modification. Lys-17 carries the N6-succinyllysine; alternate modification. Tyr-25 carries the post-translational modification Phosphotyrosine. Phosphoserine is present on Ser-36. The residue at position 41 (Lys-41) is an N6-succinyllysine. Phosphoserine is present on Ser-50. An O2-binding site is contributed by His-59. His-88 lines the heme b pocket. Phosphoserine is present on Ser-103. Thr-109 is modified (phosphothreonine). Residues Ser-125 and Ser-132 each carry the phosphoserine modification. A phosphothreonine mark is found at Thr-135 and Thr-138. Position 139 is a phosphoserine (Ser-139).

It belongs to the globin family. In terms of assembly, heterotetramer of two alpha chains and two beta chains. In terms of tissue distribution, red blood cells.

In terms of biological role, involved in oxygen transport from the lung to the various peripheral tissues. Its function is as follows. Hemopressin acts as an antagonist peptide of the cannabinoid receptor CNR1. Hemopressin-binding efficiently blocks cannabinoid receptor CNR1 and subsequent signaling. This Chlorocebus aethiops (Green monkey) protein is Hemoglobin subunit alpha (HBA).